Reading from the N-terminus, the 875-residue chain is SPbeta prophage-derived uncharacterized protein YomG (875 aa).

A coiled-coil region spans residues 351 to 381; sequence AKKAEISRINSQITNISQEIEKLKDRLSMDK. The Fibronectin type-III domain maps to 537 to 648; it reads PVANPTILNN…SIDSSGRILS (112 aa).

The polypeptide is SPbeta prophage-derived uncharacterized protein YomG (yomG) (Bacillus subtilis (strain 168)).